Consider the following 812-residue polypeptide: Chromosome alignment-maintaining phosphoprotein 1 (812 aa).

The residue at position 1 (Met1) is an N-acetylmethionine. Basic and acidic residues predominate over residues 86–105; it reads ASPDKWNDKPKNQLNKETDP. Disordered stretches follow at residues 86–124 and 136–546; these read ASPD…SAEP and KLGS…PEAR. Ser87, Ser108, Ser173, Ser184, Ser204, Ser214, and Ser217 each carry phosphoserine. A compositionally biased stretch (pro residues) spans 202–213; that stretch reads VPSPEPQKPAPV. Positions 220-233 are enriched in polar residues; it reads ATLSNPKPQKQSHF. A phosphoserine mark is found at Ser244, Ser247, Ser253, Ser264, Ser275, Ser282, Ser286, Ser297, Ser308, Ser319, Ser344, Ser355, Ser376, Ser382, and Ser386. Positions 271-490 are mediates interaction with MAD2L2; that stretch reads ARTTSPEPRK…KSSFFIEPQK (220 aa). Pro residues predominate over residues 284 to 297; that stretch reads SESPEPWKPFPAVS. Pro residues predominate over residues 336 to 361; it reads PAKPAPSVSPGPWKPIPSVSPGPWKP. The segment covering 363-392 has biased composition (low complexity); sequence PSVSSASWKSSSVSPSSWKSPPASPESWKS. Thr403 is subject to Phosphothreonine. 8 positions are modified to phosphoserine: Ser405, Ser416, Ser427, Ser432, Ser436, Ser443, Ser445, and Ser452. The segment at 451–590 is mediates localization to the spindle and the kinetochore and is required for the attachment of spindle microtubules to the kinetochore; sequence LSPDQRKTSP…ELQIDAIDDQ (140 aa). Position 458 is a phosphothreonine (Thr458). Residues Ser459, Ser462, Ser472, and Ser476 each carry the phosphoserine modification. Lys490 is subject to N6-acetyllysine; alternate. Lys490 participates in a covalent cross-link: Glycyl lysine isopeptide (Lys-Gly) (interchain with G-Cter in SUMO2); alternate. The span at 499-512 shows a compositional bias: low complexity; that stretch reads PGPSGPSESPKAAS. Ser507, Ser512, and Ser542 each carry phosphoserine. Lys565 is covalently cross-linked (Glycyl lysine isopeptide (Lys-Gly) (interchain with G-Cter in SUMO2)). Phosphoserine occurs at positions 572 and 603. Residues 591-812 are mediates localization to the chromosome and the spindle and negatively regulates chromosome alignment; that stretch reads KCDILVQEEL…LEPPLEEQQI (222 aa). Lys606 is covalently cross-linked (Glycyl lysine isopeptide (Lys-Gly) (interchain with G-Cter in SUMO2)). 4 positions are modified to phosphoserine: Ser615, Ser626, Ser627, and Ser632. Residue Lys638 forms a Glycyl lysine isopeptide (Lys-Gly) (interchain with G-Cter in SUMO2) linkage. A phosphoserine mark is found at Ser651, Ser652, and Ser653. Residue Lys670 forms a Glycyl lysine isopeptide (Lys-Gly) (interchain with G-Cter in SUMO2) linkage. At Ser675 the chain carries Phosphoserine. Lys689 is covalently cross-linked (Glycyl lysine isopeptide (Lys-Gly) (interchain with G-Cter in SUMO2)). Ser736 carries the phosphoserine modification. The segment at 738–760 adopts a C2H2-type zinc-finger fold; sequence YKCTICGKAFLLESLLKNHVAAH.

In terms of assembly, interacts with MAD2L2. Interacts with POGZ, CBX1, CBX3 and CBX5. Post-translationally, phosphorylated by CDK1. Mitotic phosphorylation is required for the attachment of spindle microtubules to the kinetochore.

It localises to the nucleus. Its subcellular location is the chromosome. It is found in the centromere. The protein localises to the kinetochore. The protein resides in the cytoplasm. It localises to the cytoskeleton. Its subcellular location is the spindle. Functionally, required for proper alignment of chromosomes at metaphase and their accurate segregation during mitosis. Involved in the maintenance of spindle microtubules attachment to the kinetochore during sister chromatid biorientation. May recruit CENPE and CENPF to the kinetochore. This is Chromosome alignment-maintaining phosphoprotein 1 (CHAMP1) from Homo sapiens (Human).